Reading from the N-terminus, the 2304-residue chain is Protein Ycf2 (2304 aa).

Residue 1637–1644 coordinates ATP; it reads GSIGTGRS.

Belongs to the Ycf2 family.

It localises to the plastid. The protein localises to the chloroplast stroma. Functionally, probable ATPase of unknown function. Its presence in a non-photosynthetic plant (Epifagus virginiana) and experiments in tobacco indicate that it has an essential function which is probably not related to photosynthesis. This is Protein Ycf2 from Amborella trichopoda.